The chain runs to 379 residues: MDTLLPAFIDAEEQEQAQEIRTFLKEQGADLKEESITPLQDELAEILECCQVCFKEDAELESVMNSILSLVLVVPEKRNELIKKCCDKLKANMSEDENSSAAARLRVLSVLFSGLPEKDPMRHEVYCTQLTIAAKASLVDDIPTELELVKGWLGLWDVDADQRRQVFRLLHGALHDEKRSEEASKVMIELLSTYTDENASAAREDAKSCVVSCLTKPNVLIMDNILSLKPVAVLQGDPIYQLLQIFVSGDVQDYKKFYDSNTDFINSIGLSHEMNLKKMRVLTLMSIGKETDEISYEDLATKLGISSDEIEQFLIEAIQTGLVKARLDQVHRKVIISSVAQRTFGINQWQNLHSRLVKWRDNLLSVRGGLQSVVPPITV.

One can recognise a PCI domain in the interval 179-341 (RSEEASKVMI…RKVIISSVAQ (163 aa)).

This sequence belongs to the eIF-3 subunit M family. As to quaternary structure, component of the eukaryotic translation initiation factor 3 (eIF-3) complex.

The protein localises to the cytoplasm. Its function is as follows. Component of the eukaryotic translation initiation factor 3 (eIF-3) complex, which is involved in protein synthesis of a specialized repertoire of mRNAs and, together with other initiation factors, stimulates binding of mRNA and methionyl-tRNAi to the 40S ribosome. The eIF-3 complex specifically targets and initiates translation of a subset of mRNAs involved in cell proliferation. This is Eukaryotic translation initiation factor 3 subunit M from Nematostella vectensis (Starlet sea anemone).